Reading from the N-terminus, the 671-residue chain is MESIEQQLTELRTTLRHHEYLYHVMDAPEIPDAEYDRLMRELRELETKHPELITPDSPTQRVGAAPLAAFSQIRHEVPMLSLDNVFDEESFLAFNKRVQDRLKSNEKVTWCCELKLDGLAVSILYENGVLVSAATRGDGTTGEDITSNVRTIRAIPLKLHGENIPARLEVRGEVFLPQAGFEKINEDARRTGGKVFANPRNAAAGSLRQLDPRITAKRPLTFFCYGVGVLEGGELPDTHLGRLLQFKQWGLPVSDRVTLCESAEEVLAFYHKVEEDRPTLGFDIDGVVIKVNSLAQQEQLGFVARAPRWAVAFKFPAQEQMTFVRDVEFQVGRTGAITPVARLEPVHVAGVLVSNATLHNADEIERLGLRIGDKVVIRRAGDVIPQVVNVVLSERPEDTREVVFPTHCPVCGSDVERVEGEAVARCTGGLICGAQRKESLKHFVSRRAMDVDGMGDKIIDQLVEKEYVHTPADLFKLTAGKLTGLERMGPKSAQNVVNALEKAKETTFARFLYALGIREVGEATAAGLAAYFGTLEALEAASIEELQKVPDVGIVVASHVHNFFAEESNRNVISELLAEGVHWPAPIVINAEEIDSPFAGKTVVLTGSLSQMSRDDAKARLVELGAKVAGSVSKKTDLVIAGEAAGSKLAKAQELGIEVIDEAEMLRLLGS.

NAD(+) is bound by residues 32–36 (DAEYD), 81–82 (SL), and Glu-113. Residue Lys-115 is the N6-AMP-lysine intermediate of the active site. NAD(+)-binding residues include Arg-136, Glu-173, Lys-290, and Lys-314. Residues Cys-408, Cys-411, Cys-426, and Cys-432 each coordinate Zn(2+). Residues 593–671 (EIDSPFAGKT…EAEMLRLLGS (79 aa)) enclose the BRCT domain.

The protein belongs to the NAD-dependent DNA ligase family. LigA subfamily. Requires Mg(2+) as cofactor. Mn(2+) serves as cofactor.

The enzyme catalyses NAD(+) + (deoxyribonucleotide)n-3'-hydroxyl + 5'-phospho-(deoxyribonucleotide)m = (deoxyribonucleotide)n+m + AMP + beta-nicotinamide D-nucleotide.. Its function is as follows. DNA ligase that catalyzes the formation of phosphodiester linkages between 5'-phosphoryl and 3'-hydroxyl groups in double-stranded DNA using NAD as a coenzyme and as the energy source for the reaction. It is essential for DNA replication and repair of damaged DNA. This chain is DNA ligase, found in Escherichia coli O9:H4 (strain HS).